The primary structure comprises 775 residues: Polyribonucleotide nucleotidyltransferase (775 aa).

Mg(2+) contacts are provided by aspartate 487 and aspartate 493. Residues 554–613 form the KH domain; the sequence is PKVEVVDVPEEKAPLIIGPGGSTVKKIYDETGVKVWVGEQGKVYLFVFPGGDVEKAKQMI. S1 motif domains follow at residues 623–693 and 707–775; these read GAVY…IGIE and GDVY…TDDV.

This sequence belongs to the polyribonucleotide nucleotidyltransferase family. Requires Mg(2+) as cofactor.

It is found in the cytoplasm. It carries out the reaction RNA(n+1) + phosphate = RNA(n) + a ribonucleoside 5'-diphosphate. Its function is as follows. Involved in mRNA degradation. Catalyzes the phosphorolysis of single-stranded polyribonucleotides processively in the 3'- to 5'-direction. In Aquifex aeolicus (strain VF5), this protein is Polyribonucleotide nucleotidyltransferase.